The chain runs to 565 residues: MARPKNVKHIFVTGGVISSLGKGILSASLGMLLKSRGLKVAIQKYDPYINVDPGTMSPYQHGEVYVTDDGAETDLDLGHYERFLDESTTQSSNLTMGRVYKSVIDKERRGEYLGATVQVVPHVIDEIKDRMAEQAKNGDLDVLITEIGGTIGDIESLPFLEAMRQMKLEMGDSNLLNIHLTFVPYIKAASELKTKPTQHSVKMLLGVGIQPDILVCRSEKPLSREIKNKVGHFCNVNELDVIGLNDCDTIYEVPLMLLKEKLDLRVLKKLGLKKYKEPTLDYWRDFCNKVKFPQDGEVTIGICGKYTEYPDAYKSIIESFIHAGASNNVKVNVKLLRAEDAELNAFDFAKELEGINGILVAPGFGDRGIEGKIKYIQYAREHNVPFLGICLGMQCASIEFARNVCGLQDANSTEFNKRTRFPVIDLMAHQKKVKEKGGTMRLGSYPCIISEGSKAYAVYHKFLINERHRHRYEFNNAYRKNFEESGMVFSGTSPNGELVEIIELKNHRWFVAVQFHPELKSRVQKVHPVFHGFVAAAKEYAHGVHQMDLVVEMPSLVPVLTEPTQ.

The interval 1–272 is amidoligase domain; that stretch reads MARPKNVKHI…DLRVLKKLGL (272 aa). Serine 18 is a binding site for CTP. Residue serine 18 coordinates UTP. 19–24 contributes to the ATP binding site; the sequence is SLGKGI. Tyrosine 59 contributes to the L-glutamine binding site. An ATP-binding site is contributed by aspartate 76. Mg(2+) is bound by residues aspartate 76 and glutamate 146. Residues 153–155, 193–198, and lysine 229 each bind CTP; these read DIE and KTKPTQ. UTP-binding positions include 193-198 and lysine 229; that span reads KTKPTQ. In terms of domain architecture, Glutamine amidotransferase type-1 spans 299–543; the sequence is TIGICGKYTE…VAAAKEYAHG (245 aa). Glycine 363 is an L-glutamine binding site. The active-site Nucleophile; for glutamine hydrolysis is cysteine 390. Residues 391–394, glutamate 414, and arginine 471 contribute to the L-glutamine site; that span reads LGMQ. Residues histidine 516 and glutamate 518 contribute to the active site.

The protein belongs to the CTP synthase family. In terms of assembly, homotetramer.

The catalysed reaction is UTP + L-glutamine + ATP + H2O = CTP + L-glutamate + ADP + phosphate + 2 H(+). It catalyses the reaction L-glutamine + H2O = L-glutamate + NH4(+). The enzyme catalyses UTP + NH4(+) + ATP = CTP + ADP + phosphate + 2 H(+). It participates in pyrimidine metabolism; CTP biosynthesis via de novo pathway; CTP from UDP: step 2/2. Allosterically activated by GTP, when glutamine is the substrate; GTP has no effect on the reaction when ammonia is the substrate. The allosteric effector GTP functions by stabilizing the protein conformation that binds the tetrahedral intermediate(s) formed during glutamine hydrolysis. Inhibited by the product CTP, via allosteric rather than competitive inhibition. Its function is as follows. Catalyzes the ATP-dependent amination of UTP to CTP with either L-glutamine or ammonia as the source of nitrogen. Regulates intracellular CTP levels through interactions with the four ribonucleotide triphosphates. In Pelodictyon phaeoclathratiforme (strain DSM 5477 / BU-1), this protein is CTP synthase.